Here is a 296-residue protein sequence, read N- to C-terminus: GTPase Era (296 aa).

One can recognise an Era-type G domain in the interval Lys7 to Ser174. A G1 region spans residues Gly15 to Ser22. Gly15–Ser22 provides a ligand contact to GTP. Residues Gln41 to Val45 are G2. The G3 stretch occupies residues Asp62–Gly65. GTP is bound by residues Asp62–Ile66 and Asn124–Asp127. A G4 region spans residues Asn124–Asp127. Positions Ile153–Ala155 are G5. A KH type-2 domain is found at Leu205 to Glu282.

The protein belongs to the TRAFAC class TrmE-Era-EngA-EngB-Septin-like GTPase superfamily. Era GTPase family. As to quaternary structure, monomer.

It localises to the cytoplasm. The protein resides in the cell inner membrane. Its function is as follows. An essential GTPase that binds both GDP and GTP, with rapid nucleotide exchange. Plays a role in 16S rRNA processing and 30S ribosomal subunit biogenesis and possibly also in cell cycle regulation and energy metabolism. This chain is GTPase Era, found in Ehrlichia canis (strain Jake).